The sequence spans 279 residues: Movement protein (279 aa).

The protein belongs to the cucumovirus movement protein family.

Its subcellular location is the host cell junction. The protein resides in the host plasmodesma. Functionally, transports viral genome to neighboring plant cells directly through plasmosdesmata, without any budding. The movement protein allows efficient cell to cell propagation, by bypassing the host cell wall barrier. Acts by forming a tubular structure at the host plasmodesmata, enlarging it enough to allow free passage of virion capsids. This chain is Movement protein, found in Cucumber mosaic virus (strain M) (CMV).